Reading from the N-terminus, the 323-residue chain is Zinc finger protein 784 (323 aa).

A disordered region spans residues 1 to 26; the sequence is MAAARPEAQSRSSPTPESRSQEPLDL. The span at 9–18 shows a compositional bias: polar residues; the sequence is QSRSSPTPES. S13 is modified (phosphoserine). C2H2-type zinc fingers lie at residues 65 to 87, 101 to 123, 129 to 151, 196 to 218, 224 to 246, and 252 to 274; these read FHCA…EHGH, SRCH…YSLH, YRCA…QHRH, FACR…ERVH, YHCG…ARIH, and FRCT…QRTH. A disordered region spans residues 269–323; sequence KHQRTHFHGPGPGLGDSGGQLGSSAAEGSGSGCGVGDPAEEGRGETAKVKVEADQ. Positions 278 to 289 are enriched in gly residues; that stretch reads PGPGLGDSGGQL. Residues 308–323 show a composition bias toward basic and acidic residues; sequence EEGRGETAKVKVEADQ. K318 participates in a covalent cross-link: Glycyl lysine isopeptide (Lys-Gly) (interchain with G-Cter in SUMO2).

Belongs to the krueppel C2H2-type zinc-finger protein family.

It localises to the nucleus. May be involved in transcriptional regulation. The sequence is that of Zinc finger protein 784 (ZNF784) from Homo sapiens (Human).